Reading from the N-terminus, the 659-residue chain is MVAKWCVLAMCLLVAVGADKCPRATDQEAKQKRMLEVLQHVNKPYVAETKDPKIPAGSEDVFKHLGILEKHEVFSLFDERQWDEATTAAVYMLTAPSFDEFIDRAEIVRHRINEDMFYYAFSVAAVHRDDTRGINLPRIHEIYPDKFLKHKVIVEVKNSINSGQEDPLIDATHEFTDLRDPNSKLHYFLEDVGLNSHHYHWHVIHPAVWQESLEELTHQHKDRKGELFYFMHHQMVNRYDAERLSNGLPRSTTFENWNDPIETGYAPHLTIDRTGYRYQFRPDNLVVRDLPELTKNHMRQWRDRILYAVHRGEALAANGSSVSLRDERGIDVLGNMVESSLQSINRPFYGNVHCYAHVIAARIADPDGKYGEDNGAMYDVATSARDPLFYQWHKFIDNLFHEYKDALKAYSSEDLTYNDITIEEVNVQGEGGSPANTVTTFLENSIVHLDEGFSFTARGHARVKVQHLQHEGFNYQIKVNNAGGEHKVVFRVFLAPKYDEEHHEFDFNEQRGMAIELDKFVATVPAGSSTVEQHSSKSSVTQSNDNFYGSSATRSSENHCSCGWPDYLLIPKGNHQGVQFNVYVIATSYDEDHVESDESCHCGDSLSYCGALYDKYPDRRPMGYPFDRHADAQTFDEFKTKNMNSVTVTIKHTGEVKDA.

Residues 1–18 (MVAKWCVLAMCLLVAVGA) form the signal peptide. Cu cation contacts are provided by His198, His202, and His232. A glycan (N-linked (GlcNAc...) asparagine) is linked at Asn318. Positions 353, 357, and 393 each coordinate Cu cation. A disulfide bridge links Cys562 with Cys609.

This sequence belongs to the tyrosinase family. Hemocyanin subfamily. In terms of assembly, 36-chain polymer consisting of 6 hexamers, each of which includes 4 different chains, A, B, C and D. As to expression, hemolymph.

It is found in the secreted. Its subcellular location is the extracellular space. Hemocyanins are copper-containing oxygen carriers occurring freely dissolved in the hemolymph of many mollusks and arthropods. This is Hemocyanin subunit B (HCB) from Scutigera coleoptrata (House centipede).